A 208-amino-acid chain; its full sequence is Guanylate kinase (208 aa).

The Guanylate kinase-like domain maps to 4–184 (GTLYIVSAPS…ALMDFKAIIR (181 aa)). 11–18 (APSGAGKS) contributes to the ATP binding site.

This sequence belongs to the guanylate kinase family.

It is found in the cytoplasm. It catalyses the reaction GMP + ATP = GDP + ADP. Its function is as follows. Essential for recycling GMP and indirectly, cGMP. This Photobacterium profundum (strain SS9) protein is Guanylate kinase.